The chain runs to 296 residues: Polyamine aminopropyltransferase (296 aa).

In terms of domain architecture, PABS spans 5 to 238 (ELWYETLHAN…GIMTFAWATQ (234 aa)). S-methyl-5'-thioadenosine is bound at residue Gln33. His64 and Asp88 together coordinate spermidine. Residues Glu108 and 140–141 (DG) each bind S-methyl-5'-thioadenosine. Residue Asp158 is the Proton acceptor of the active site. A spermidine-binding site is contributed by 158–161 (DCTD). Pro165 is an S-methyl-5'-thioadenosine binding site.

The protein belongs to the spermidine/spermine synthase family. Homodimer or homotetramer.

The protein resides in the cytoplasm. It carries out the reaction S-adenosyl 3-(methylsulfanyl)propylamine + putrescine = S-methyl-5'-thioadenosine + spermidine + H(+). It participates in amine and polyamine biosynthesis; spermidine biosynthesis; spermidine from putrescine: step 1/1. Catalyzes the irreversible transfer of a propylamine group from the amino donor S-adenosylmethioninamine (decarboxy-AdoMet) to putrescine (1,4-diaminobutane) to yield spermidine. The protein is Polyamine aminopropyltransferase of Yersinia pestis bv. Antiqua (strain Antiqua).